Reading from the N-terminus, the 143-residue chain is Hemoglobin subunit alpha (143 aa).

One can recognise a Globin domain in the interval 2-143 (VLSPADKTNV…VSTVLVSKYR (142 aa)). A Phosphoserine modification is found at S4. N6-succinyllysine is present on K8. The residue at position 9 (T9) is a Phosphothreonine. Position 12 is an N6-succinyllysine (K12). K17 carries the post-translational modification N6-acetyllysine; alternate. At K17 the chain carries N6-succinyllysine; alternate. Residue Y25 is modified to Phosphotyrosine. A Phosphoserine modification is found at S36. An N6-succinyllysine modification is found at K41. S51 bears the Phosphoserine mark. H60 is an O2 binding site. H89 is a heme b binding site. A Phosphoserine modification is found at S104. Residue T110 is modified to Phosphothreonine. At S126 the chain carries Phosphoserine. A Phosphothreonine modification is found at T136. At S140 the chain carries Phosphoserine.

This sequence belongs to the globin family. Heterotetramer of two alpha chains and two beta chains. As to expression, red blood cells.

Functionally, involved in oxygen transport from the lung to the various peripheral tissues. In terms of biological role, hemopressin acts as an antagonist peptide of the cannabinoid receptor CNR1. Hemopressin-binding efficiently blocks cannabinoid receptor CNR1 and subsequent signaling. This chain is Hemoglobin subunit alpha (HBA), found in Pipistrellus abramus (Japanese pipistrelle).